The primary structure comprises 424 residues: Chloroquine resistance transporter (424 aa).

Positions 1–10 (MTILKKKKKG) are enriched in basic residues. Positions 1–32 (MTILKKKKKGSPQITPDERYRELDSHAQNESE) are disordered. At 1–57 (MTILKKKKKGSPQITPDERYRELDSHAQNESEIQEDVPISRKIANFLKLAYNEIREN) the chain is on the cytoplasmic side. The span at 16-29 (PDERYRELDSHAQN) shows a compositional bias: basic and acidic residues. A helical membrane pass occupies residues 58 to 78 (ISIYLLIIVYLCVCVMNKLLA). Over 79–89 (KRTLKKIGNYS) the chain is Vacuolar. An N-linked (GlcNAc...) asparagine glycan is attached at asparagine 87. Residues 90-110 (FVTSETHNCICMVVFFALYFM) form a helical membrane-spanning segment. Residues 111–124 (FGRRVMSAKERHRN) lie on the Cytoplasmic side of the membrane. The helical transmembrane segment at 125–145 (FGVQFLLISLLDACSVIIAFI) threads the bilayer. Over 146–153 (GLTRTTGN) the chain is Vacuolar. The chain crosses the membrane as a helical span at residues 154–174 (IQSFVMQLSIPINMFFCFLIL). At 175–179 (RYRYH) the chain is on the cytoplasmic side. Residues 180–200 (LFNYVGAFIIVVTIAVVEFML) traverse the membrane as a helical segment. Over 201–208 (SFETQEEN) the chain is Vacuolar. The helical transmembrane segment at 209–229 (SIVFNLVLIASLIPLSFSNMT) threads the bilayer. The Cytoplasmic portion of the chain corresponds to 230 to 246 (REIVFKKYKINILRLNA). The chain crosses the membrane as a helical span at residues 247–267 (VVSFFQIFTSCLMLPMYTLPF). Residues 268-316 (LKQINLPFSEIGTNIKNGFRCLFLGQNTIVENCGLGMSKMCDDCEGAWK) lie on the Vacuolar side of the membrane. Cystine bridges form between cysteine 288/cysteine 311 and cysteine 300/cysteine 308. Residues 317–337 (TFIAYSFFNICDNLITSFIIE) traverse the membrane as a helical segment. Residues 338-345 (KFSTMTYT) are Cytoplasmic-facing. The chain crosses the membrane as a helical span at residues 346 to 366 (IVSCIQGPAIAIAYYFKFLAG). At 367–376 (DAVMQPRMLD) the chain is on the vacuolar side. A helical transmembrane segment spans residues 377–397 (FVTLFGYLFGSIIYRIGNIIL). Topologically, residues 398–424 (EKKRMMEAGNDDDSEGELTNADSIITH) are cytoplasmic.

It belongs to the CRT-like transporter family.

The protein localises to the vacuole membrane. Functionally, nutrient transporter. Involved in maintaining the osmotic homeostasis of the digestive vacuole. This chain is Chloroquine resistance transporter, found in Plasmodium vivax (strain Salvador I).